Consider the following 549-residue polypeptide: Cytoplasmic trehalase (549 aa).

Substrate-binding positions include R168, 175 to 176 (WD), N212, 221 to 223 (RSQ), 292 to 294 (RDE), and G324. Residues D326 and E509 each act as proton donor/acceptor in the active site. E525 lines the substrate pocket.

Belongs to the glycosyl hydrolase 37 family. Monomer.

The protein resides in the cytoplasm. The enzyme catalyses alpha,alpha-trehalose + H2O = alpha-D-glucose + beta-D-glucose. Its pathway is glycan degradation; trehalose degradation; D-glucose from alpha,alpha-trehalose: step 1/1. Its function is as follows. Hydrolyzes trehalose to glucose. Could be involved, in cells returning to low osmolarity conditions, in the utilization of the accumulated cytoplasmic trehalose, which was synthesized in response to high osmolarity. The chain is Cytoplasmic trehalase from Shigella boydii serotype 4 (strain Sb227).